The sequence spans 165 residues: MTGSQVIDAEEDRHKLVVEYKDALQPADFYHNFKQRGIRSVQLIPYLEFDDRGDLTAASVTAELWGKFLIALFECWVRADISRISIELFDATLQKWCGSENPQPRCDCQACDWHRLCPHARQETPDSVLCAGYQAFYSYSAPHMRVMRDLIKQHRSPMELMTMLR.

This is an uncharacterized protein from Escherichia coli (strain K12).